The primary structure comprises 526 residues: Nuclear pore glycoprotein p62 (526 aa).

Ser2 carries the N-acetylserine modification. 4 consecutive repeat copies span residues 6–7, 46–47, 78–79, and 115–116. Residues 6-144 are 5 X 2 AA repeats of F-G; it reads FGGTGAPAGG…GTAPTGFVFG (139 aa). A disordered region spans residues 43-82; the sequence is GFNFGTPSQPAATTPSTSLFSLTTQTPTTQTPGFNFGTTP. The segment covering 46–81 has biased composition (low complexity); sequence FGTPSQPAATTPSTSLFSLTTQTPTTQTPGFNFGTT. The segment covering 128-137 has biased composition (polar residues); that stretch reads SGSTSNQGTA. The interval 128 to 148 is disordered; that stretch reads SGSTSNQGTAPTGFVFGSSTT. Copy 5 of the repeat occupies 143–144; the sequence is FG. The tract at residues 332 to 462 is required for centrosome localization; sequence MTYAQLESLI…QDLKDIIEHL (131 aa). Residues 332 to 462 adopt a coiled-coil conformation; the sequence is MTYAQLESLI…QDLKDIIEHL (131 aa). An O-linked (GlcNAc) threonine glycan is attached at Thr377. Ser412 and Ser422 each carry phosphoserine. Ser472 carries O-linked (GlcNAc) serine glycosylation.

The protein belongs to the nucleoporin NSP1/NUP62 family. As to quaternary structure, component of the p62 complex, a complex at least composed of NUP62, NUP54, and NUP58. Interacts with NUP88. Interacts with NUTF2. Interacts with HIKESHI. Interacts with OSBPL8. Interacts with CAPG. Interacts with SAS6 and TUBG1 at the centrosome. Interacts with MCM3AP. Post-translationally, O-glycosylated. In terms of processing, the inner channel of the NPC has a different redox environment from the cytoplasm and allows the formation of interchain disulfide bonds between some nucleoporins, the significant increase of these linkages upon oxidative stress reduces the permeability of the NPC.

The protein resides in the nucleus. Its subcellular location is the nuclear pore complex. The protein localises to the cytoplasm. It is found in the cytoskeleton. It localises to the spindle pole. The protein resides in the nucleus envelope. Its subcellular location is the microtubule organizing center. The protein localises to the centrosome. Essential component of the nuclear pore complex. The N-terminal is probably involved in nucleocytoplasmic transport. The C-terminal is involved in protein-protein interaction probably via coiled-coil formation, promotes its association with centrosomes and may function in anchorage of p62 to the pore complex. Plays a role in mitotic cell cycle progression by regulating centrosome segregation, centriole maturation and spindle orientation. It might be involved in protein recruitment to the centrosome after nuclear breakdown. This is Nuclear pore glycoprotein p62 (Nup62) from Mus musculus (Mouse).